We begin with the raw amino-acid sequence, 325 residues long: Mediator of RNA polymerase II transcription subunit 30 (325 aa).

Low complexity-rich tracts occupy residues 1–11 (MWKYGQNQGNQ), 109–122 (PPQQ…MGPQ), and 132–154 (GPQQ…QQQQ). Disordered stretches follow at residues 1–26 (MWKY…MMPM) and 109–176 (PPQQ…LAIS). Residues 158-169 (GSGGAPGAGGVG) show a composition bias toward gly residues.

This sequence belongs to the Mediator complex subunit 30 family. As to quaternary structure, component of the Mediator complex.

It is found in the nucleus. In terms of biological role, component of the Mediator complex, a coactivator involved in the regulated transcription of nearly all RNA polymerase II-dependent genes. Mediator functions as a bridge to convey information from gene-specific regulatory proteins to the basal RNA polymerase II transcription machinery. Mediator is recruited to promoters by direct interactions with regulatory proteins and serves as a scaffold for the assembly of a functional preinitiation complex with RNA polymerase II and the general transcription factors. The chain is Mediator of RNA polymerase II transcription subunit 30 (MED30) from Drosophila pseudoobscura pseudoobscura (Fruit fly).